A 215-amino-acid chain; its full sequence is UPF0502 protein PP_2442 (215 aa).

This sequence belongs to the UPF0502 family.

This chain is UPF0502 protein PP_2442, found in Pseudomonas putida (strain ATCC 47054 / DSM 6125 / CFBP 8728 / NCIMB 11950 / KT2440).